We begin with the raw amino-acid sequence, 160 residues long: Putative antiporter subunit mnhE2 (160 aa).

Transmembrane regions (helical) follow at residues 22–42 (SFQF…IYIL), 61–81 (FLGV…NYIL), and 102–122 (WAIT…VIRI).

Belongs to the CPA3 antiporters (TC 2.A.63) subunit E family. In terms of assembly, may form a heterooligomeric complex that consists of seven subunits: mnhA2, mnhB2, mnhC2, mnhD2, mnhE2, mnhF2 and mnhG2.

The protein resides in the cell membrane. The sequence is that of Putative antiporter subunit mnhE2 (mnhE2) from Staphylococcus haemolyticus (strain JCSC1435).